A 129-amino-acid chain; its full sequence is Small ribosomal subunit protein uS11 (129 aa).

Belongs to the universal ribosomal protein uS11 family. In terms of assembly, part of the 30S ribosomal subunit. Interacts with proteins S7 and S18. Binds to IF-3.

Its function is as follows. Located on the platform of the 30S subunit, it bridges several disparate RNA helices of the 16S rRNA. Forms part of the Shine-Dalgarno cleft in the 70S ribosome. In Mycoplasma mycoides subsp. mycoides SC (strain CCUG 32753 / NCTC 10114 / PG1), this protein is Small ribosomal subunit protein uS11.